A 141-amino-acid chain; its full sequence is VLSAADKGNVKAAWGKVGGHAAEYGAEALERMFLSFPTTKTYFPHFDLSQGSAQVKGHGAKVAAALTKAVEHLDDLPGALSELSDLHAHKLRVDPVNFKLLSHSLLVTLASHLPSDFTPAVHASLDKFLANVSTVLTSKYR.

The Globin domain occupies 1 to 141 (VLSAADKGNV…VSTVLTSKYR (141 aa)). His-58 serves as a coordination point for O2. His-87 contacts heme b.

Belongs to the globin family. As to quaternary structure, heterotetramer of two alpha chains and two beta chains. In terms of tissue distribution, red blood cells.

Functionally, involved in oxygen transport from the lung to the various peripheral tissues. This chain is Hemoglobin subunit alpha-1, found in Bos mutus grunniens (Wild yak).